Consider the following 391-residue polypeptide: Phosphoglycerate kinase (391 aa).

Residues 21–23 (DFN), Arg-41, 64–67 (HLGR), Arg-121, and Arg-154 each bind substrate. ATP contacts are provided by residues Lys-205, Glu-322, and 348–351 (GGDS).

It belongs to the phosphoglycerate kinase family. In terms of assembly, monomer.

It localises to the cytoplasm. It catalyses the reaction (2R)-3-phosphoglycerate + ATP = (2R)-3-phospho-glyceroyl phosphate + ADP. The protein operates within carbohydrate degradation; glycolysis; pyruvate from D-glyceraldehyde 3-phosphate: step 2/5. This chain is Phosphoglycerate kinase, found in Solibacter usitatus (strain Ellin6076).